The sequence spans 183 residues: MNLWVTGYRSYELGVFNSKDKKVEVIKYALQKKILEKLDEGLEWVITGAQMGIEQWTCEVVAEMKKEYPELKLAIMMPYSEFAGNWNEANQESFSIRCSLADFVGEVSKEKYKSPMQLKNYQNFMLDHTDQAMLIYDPEHEGKTKYDYEMIKKYSEQEDYSYDLVDMYQLQEFAEMYQEKDSF.

This sequence belongs to the UPF0398 family.

This chain is UPF0398 protein LSL_0930, found in Ligilactobacillus salivarius (strain UCC118) (Lactobacillus salivarius).